Reading from the N-terminus, the 597-residue chain is tRNA uridine 5-carboxymethylaminomethyl modification enzyme MnmG (597 aa).

10 to 15 (GGGHAG) is an FAD binding site. 267 to 281 (GPRYCPSIEDKVVRF) contributes to the NAD(+) binding site.

It belongs to the MnmG family. Homodimer. Heterotetramer of two MnmE and two MnmG subunits. The cofactor is FAD.

It is found in the cytoplasm. In terms of biological role, NAD-binding protein involved in the addition of a carboxymethylaminomethyl (cmnm) group at the wobble position (U34) of certain tRNAs, forming tRNA-cmnm(5)s(2)U34. The chain is tRNA uridine 5-carboxymethylaminomethyl modification enzyme MnmG from Thermus thermophilus (strain ATCC BAA-163 / DSM 7039 / HB27).